Here is a 196-residue protein sequence, read N- to C-terminus: uncharacterized protein (196 aa).

To H.influenzae HI_0431.

This is an uncharacterized protein from Escherichia coli (strain K12).